A 551-amino-acid chain; its full sequence is MATVRQSDGVAANGLAVAAAANGKSNGHGVAAAVNGKSNGHGVDADANGKSNGHGVAADANGKSNGHAEATANGHGEATANGKTNGHRESNGHAEAADANGESNEHAEDSAANGESNGHAAAAAEEEEAVEWNFAGAKDGVLAATGANMSIRAIRYKISASVQEKGPRPVLPLAHGDPSVFPAFRTAVEAEDAVAAAVRTGQFNCYPAGVGLPAARSAVAEHLSQGVPYMLSADDVFLTAGGTQAIEVIIPVLAQTAGANILLPRPGYPNYEARAAFNRLEVRHFDLIPDKGWEIDIDSLESIADKNTTAMVIINPNNPCGSVYSYDHLSKVAEVAKRLGILVIADEVYGKLVLGSAPFIPMGVFGHITPVLSIGSLSKSWIVPGWRLGWVAVYDPRKILQETKISTSITNYLNVSTDPATFIQAALPQILENTKEDFFKAIIGLLKESSEICYKQIKENKYITCPHKPEGSMFVMVKLNLHLLEEIDDDIDFCCKLAKEESVILCPGSVLGMANWVRITFACVPSSLQDGLGRIKSFCQRNKKRNSSDDC.

The tract at residues Lys24 to Glu127 is disordered. Over residues Gly86–Ala96 the composition is skewed to basic and acidic residues. Over residues Ala111 to Ala123 the composition is skewed to low complexity. Lys379 is subject to N6-(pyridoxal phosphate)lysine.

Belongs to the class-I pyridoxal-phosphate-dependent aminotransferase family. Requires pyridoxal 5'-phosphate as cofactor. In terms of tissue distribution, expressed in roots, but not in leaves.

It catalyses the reaction nicotianamine + 2-oxoglutarate = 3''-deamino-3''-oxonicotianamine + L-glutamate. Its function is as follows. Involved in biosynthesis of mugineic acid family phytosiderophores. This chain is Nicotianamine aminotransferase B, found in Hordeum vulgare (Barley).